The sequence spans 505 residues: Probable cytosol aminopeptidase (505 aa).

Residues K269 and D274 each coordinate Mn(2+). K281 is a catalytic residue. D292, D351, and E353 together coordinate Mn(2+). R355 is a catalytic residue.

The protein belongs to the peptidase M17 family. The cofactor is Mn(2+).

The protein resides in the cytoplasm. It catalyses the reaction Release of an N-terminal amino acid, Xaa-|-Yaa-, in which Xaa is preferably Leu, but may be other amino acids including Pro although not Arg or Lys, and Yaa may be Pro. Amino acid amides and methyl esters are also readily hydrolyzed, but rates on arylamides are exceedingly low.. The enzyme catalyses Release of an N-terminal amino acid, preferentially leucine, but not glutamic or aspartic acids.. Functionally, presumably involved in the processing and regular turnover of intracellular proteins. Catalyzes the removal of unsubstituted N-terminal amino acids from various peptides. The polypeptide is Probable cytosol aminopeptidase (Rhodococcus opacus (strain B4)).